A 332-amino-acid polypeptide reads, in one-letter code: Ketol-acid reductoisomerase (NADP(+)) (332 aa).

The region spanning 1–182 (MATIYYEKDA…GCTRAGVLAT (182 aa)) is the KARI N-terminal Rossmann domain. NADP(+)-binding positions include 25–28 (YGSQ), R48, S53, and 83–86 (DELQ). H108 is a catalytic residue. Residue G134 participates in NADP(+) binding. Residues 183-328 (TFKEETETDL…KELRSMMPWL (146 aa)) enclose the KARI C-terminal knotted domain. 4 residues coordinate Mg(2+): D191, E195, E227, and E231. A substrate-binding site is contributed by S252.

This sequence belongs to the ketol-acid reductoisomerase family. The cofactor is Mg(2+).

The catalysed reaction is (2R)-2,3-dihydroxy-3-methylbutanoate + NADP(+) = (2S)-2-acetolactate + NADPH + H(+). The enzyme catalyses (2R,3R)-2,3-dihydroxy-3-methylpentanoate + NADP(+) = (S)-2-ethyl-2-hydroxy-3-oxobutanoate + NADPH + H(+). The protein operates within amino-acid biosynthesis; L-isoleucine biosynthesis; L-isoleucine from 2-oxobutanoate: step 2/4. It participates in amino-acid biosynthesis; L-valine biosynthesis; L-valine from pyruvate: step 2/4. Its function is as follows. Involved in the biosynthesis of branched-chain amino acids (BCAA). Catalyzes an alkyl-migration followed by a ketol-acid reduction of (S)-2-acetolactate (S2AL) to yield (R)-2,3-dihydroxy-isovalerate. In the isomerase reaction, S2AL is rearranged via a Mg-dependent methyl migration to produce 3-hydroxy-3-methyl-2-ketobutyrate (HMKB). In the reductase reaction, this 2-ketoacid undergoes a metal-dependent reduction by NADPH to yield (R)-2,3-dihydroxy-isovalerate. The chain is Ketol-acid reductoisomerase (NADP(+)) from Methanocella arvoryzae (strain DSM 22066 / NBRC 105507 / MRE50).